The chain runs to 281 residues: ATP synthase gamma chain (281 aa).

It belongs to the ATPase gamma chain family. In terms of assembly, F-type ATPases have 2 components, CF(1) - the catalytic core - and CF(0) - the membrane proton channel. CF(1) has five subunits: alpha(3), beta(3), gamma(1), delta(1), epsilon(1). CF(0) has three main subunits: a, b and c.

It localises to the cell inner membrane. Its function is as follows. Produces ATP from ADP in the presence of a proton gradient across the membrane. The gamma chain is believed to be important in regulating ATPase activity and the flow of protons through the CF(0) complex. The chain is ATP synthase gamma chain from Ehrlichia canis (strain Jake).